The following is a 259-amino-acid chain: Acyl-[acyl-carrier-protein]--UDP-N-acetylglucosamine O-acyltransferase (259 aa).

This sequence belongs to the transferase hexapeptide repeat family. LpxA subfamily. Homotrimer.

The protein resides in the cytoplasm. The enzyme catalyses a (3R)-hydroxyacyl-[ACP] + UDP-N-acetyl-alpha-D-glucosamine = a UDP-3-O-[(3R)-3-hydroxyacyl]-N-acetyl-alpha-D-glucosamine + holo-[ACP]. Its pathway is glycolipid biosynthesis; lipid IV(A) biosynthesis; lipid IV(A) from (3R)-3-hydroxytetradecanoyl-[acyl-carrier-protein] and UDP-N-acetyl-alpha-D-glucosamine: step 1/6. Functionally, involved in the biosynthesis of lipid A, a phosphorylated glycolipid that anchors the lipopolysaccharide to the outer membrane of the cell. This chain is Acyl-[acyl-carrier-protein]--UDP-N-acetylglucosamine O-acyltransferase, found in Akkermansia muciniphila (strain ATCC BAA-835 / DSM 22959 / JCM 33894 / BCRC 81048 / CCUG 64013 / CIP 107961 / Muc).